The primary structure comprises 298 residues: MFAQARDRLQSGQVVRDYVALTKPRIVILLLITGFAAMWVAAGGPPPLGLTVVTMIGLALSCGAANAINMWYDRDIDAVMARTRRRPLPAGRLTPEQALRFGVITGALSFLVLLTVNLLTALLATAGLLFYVLVYTMWLKRSTVHNIVIGGAAGAAPPLVGWAAVTGRLDWAAVIMFLVVFLWTPPHFWALALFRSEDYERAGVPMLPVVRGERATKWQILLYSLLLIPSAALLYWTGTVGRLYLWTSVVLGCAMVSASVGLLRERAPQMDWAHRTYGWSLLYLFVIFLAMMLDVTRA.

8 consecutive transmembrane segments (helical) span residues 26–46 (IVIL…GGPP), 48–68 (LGLT…ANAI), 110–130 (FLVL…GLLF), 147–167 (IVIG…AVTG), 174–194 (VIMF…LALF), 220–240 (ILLY…TGTV), 243–263 (LYLW…VGLL), and 276–296 (TYGW…LDVT).

The protein belongs to the UbiA prenyltransferase family. Protoheme IX farnesyltransferase subfamily. As to quaternary structure, interacts with CtaA.

It localises to the cell membrane. The enzyme catalyses heme b + (2E,6E)-farnesyl diphosphate + H2O = Fe(II)-heme o + diphosphate. Its pathway is porphyrin-containing compound metabolism; heme O biosynthesis; heme O from protoheme: step 1/1. Its function is as follows. Converts heme B (protoheme IX) to heme O by substitution of the vinyl group on carbon 2 of heme B porphyrin ring with a hydroxyethyl farnesyl side group. This chain is Protoheme IX farnesyltransferase, found in Symbiobacterium thermophilum (strain DSM 24528 / JCM 14929 / IAM 14863 / T).